Consider the following 824-residue polypeptide: MTEQRRSPHHPATRPPAPPGTSRRVRLPASALRPLVLAMAGLTVSAHAQYGATSAIPNIDLVEPVVTQTPEAPPPPAEGGDLVPRLTEPATRTAPSGNTLNLSPSSTPSNPNAPAYVSGDRVTGYSEKGVEMEGHAELRRDGGVIKGDRLTYDQDTDEAHATGNVRLSKSGTLAVGPEARMRVQANEGYMLSPDYYFQQTGGSGSAERVDFLDPDRSTLKKATYTTCSPDNADWYFSARKLDLDSDRQVGTAYGGVLNFFGVPIAGAPAFSFPLNGERRSGVLPPLFGYGSNSGADLTVPYYFNLAPNRDLTIYPRILTSRGVQLGEDFRYVGDGYSGRIRGEFLPDDKKAGRNRWAYSIQHYQSIIPGMTAYVNVSKVSDDKYPDDLTRSVSQSTLRQYTQEGGVIYAWQDWVFMARVQKFQTLLPSEPSYEREPQLNAKYNRYDFHGFDISLETDYTRFRIPLTSTGFQQPEGNRAFIQPTISYPIIHPGWYVTPKFIFNAAQYNMDAGTNTTGASNTLNRAIPTVSLDSGMTFERDAPGVSKLFGVKYTQTLEPRLFYVYTPFYDQSQFPLFDTVQSDFGYGQIFTENPFTGNDRIADNNKLTLGLTTRLIESETGVERFRGTIAQRVDFTGQRVQLNGTLPDAKPSYSDLLAATTIQLFRGYYLDAGIQWNPDQDKVNYSNVALAYRPESRKLINFGYRYRRPTSVTDNTAIDQIEMSGQWPITQRTYGIGRVAFDKSANQLVDALAGFEYAADCWVGRFVYQRFRNTSNGYTGRVFFQVEFRGLSKIGSNPLDMLRLNVPGYEPVTARPVPTTPYDHYE.

Disordered regions lie at residues 1–26 (MTEQ…RRVR) and 67–117 (TQTP…PAYV). Positions 1-48 (MTEQRRSPHHPATRPPAPPGTSRRVRLPASALRPLVLAMAGLTVSAHA) are cleaved as a signal peptide. Low complexity predominate over residues 98–115 (NTLNLSPSSTPSNPNAPA).

It belongs to the LptD family. Component of the lipopolysaccharide transport and assembly complex. Interacts with LptE and LptA.

It localises to the cell outer membrane. In terms of biological role, together with LptE, is involved in the assembly of lipopolysaccharide (LPS) at the surface of the outer membrane. The polypeptide is LPS-assembly protein LptD (Cupriavidus metallidurans (strain ATCC 43123 / DSM 2839 / NBRC 102507 / CH34) (Ralstonia metallidurans)).